Reading from the N-terminus, the 206-residue chain is Large ribosomal subunit protein uL4 (206 aa).

Residues 42 to 93 (KKQQGTHKTKNRSEVSRTGAKMYKQKGTGRARHHSARAPQFRGGGKAHGPVV) form a disordered region. The span at 64–77 (YKQKGTGRARHHSA) shows a compositional bias: basic residues.

The protein belongs to the universal ribosomal protein uL4 family. As to quaternary structure, part of the 50S ribosomal subunit.

One of the primary rRNA binding proteins, this protein initially binds near the 5'-end of the 23S rRNA. It is important during the early stages of 50S assembly. It makes multiple contacts with different domains of the 23S rRNA in the assembled 50S subunit and ribosome. Its function is as follows. Forms part of the polypeptide exit tunnel. The protein is Large ribosomal subunit protein uL4 of Agrobacterium fabrum (strain C58 / ATCC 33970) (Agrobacterium tumefaciens (strain C58)).